We begin with the raw amino-acid sequence, 466 residues long: 3-isopropylmalate dehydratase large subunit (466 aa).

[4Fe-4S] cluster is bound by residues Cys-347, Cys-407, and Cys-410.

Belongs to the aconitase/IPM isomerase family. LeuC type 1 subfamily. In terms of assembly, heterodimer of LeuC and LeuD. [4Fe-4S] cluster is required as a cofactor.

The enzyme catalyses (2R,3S)-3-isopropylmalate = (2S)-2-isopropylmalate. It participates in amino-acid biosynthesis; L-leucine biosynthesis; L-leucine from 3-methyl-2-oxobutanoate: step 2/4. Its function is as follows. Catalyzes the isomerization between 2-isopropylmalate and 3-isopropylmalate, via the formation of 2-isopropylmaleate. The chain is 3-isopropylmalate dehydratase large subunit from Shigella sonnei (strain Ss046).